A 206-amino-acid polypeptide reads, in one-letter code: Large ribosomal subunit protein bL17 (206 aa).

Positions 130-141 are enriched in basic and acidic residues; the sequence is ERARGTRFEARR. The tract at residues 130-206 is disordered; it reads ERARGTRFEA…SGAGEQNSAN (77 aa). Low complexity-rich tracts occupy residues 160–181 and 189–200; these read TAAA…GAAG and DDSGIGDDSGAG.

Belongs to the bacterial ribosomal protein bL17 family. In terms of assembly, part of the 50S ribosomal subunit. Contacts protein L32.

This chain is Large ribosomal subunit protein bL17, found in Frankia casuarinae (strain DSM 45818 / CECT 9043 / HFP020203 / CcI3).